Consider the following 108-residue polypeptide: X antigen family member 5 (108 aa).

A disordered region spans residues 20–108; it reads VGPMLEPSVP…PEGGEGKPQL (89 aa). Composition is skewed to basic and acidic residues over residues 40–52 and 94–108; these read SQDH…REDD and EQFK…KPQL.

This sequence belongs to the GAGE family.

This is X antigen family member 5 (XAGE5) from Homo sapiens (Human).